A 158-amino-acid chain; its full sequence is 2-C-methyl-D-erythritol 2,4-cyclodiphosphate synthase (158 aa).

D9 and H11 together coordinate a divalent metal cation. Residues 9-11 (DVH) and 35-36 (HS) each bind 4-CDP-2-C-methyl-D-erythritol 2-phosphate. Residue H43 coordinates a divalent metal cation. 4-CDP-2-C-methyl-D-erythritol 2-phosphate contacts are provided by residues 57–59 (DIG), 62–66 (FPDTD), 101–107 (AQRPKMA), 133–136 (TTTE), F140, and R143.

This sequence belongs to the IspF family. In terms of assembly, homotrimer. A divalent metal cation is required as a cofactor.

The enzyme catalyses 4-CDP-2-C-methyl-D-erythritol 2-phosphate = 2-C-methyl-D-erythritol 2,4-cyclic diphosphate + CMP. The protein operates within isoprenoid biosynthesis; isopentenyl diphosphate biosynthesis via DXP pathway; isopentenyl diphosphate from 1-deoxy-D-xylulose 5-phosphate: step 4/6. Its function is as follows. Involved in the biosynthesis of isopentenyl diphosphate (IPP) and dimethylallyl diphosphate (DMAPP), two major building blocks of isoprenoid compounds. Catalyzes the conversion of 4-diphosphocytidyl-2-C-methyl-D-erythritol 2-phosphate (CDP-ME2P) to 2-C-methyl-D-erythritol 2,4-cyclodiphosphate (ME-CPP) with a corresponding release of cytidine 5-monophosphate (CMP). The polypeptide is 2-C-methyl-D-erythritol 2,4-cyclodiphosphate synthase (Lysinibacillus sphaericus (strain C3-41)).